We begin with the raw amino-acid sequence, 922 residues long: Isoleucine--tRNA ligase (922 aa).

Positions 58–68 (PYANGDIHIGH) match the 'HIGH' region motif. Glu552 contacts L-isoleucyl-5'-AMP. The 'KMSKS' region signature appears at 593–597 (KMSKS). Lys596 is an ATP binding site. Cys885, Cys888, Cys905, and Cys908 together coordinate Zn(2+).

The protein belongs to the class-I aminoacyl-tRNA synthetase family. IleS type 1 subfamily. In terms of assembly, monomer. Requires Zn(2+) as cofactor.

It is found in the cytoplasm. It carries out the reaction tRNA(Ile) + L-isoleucine + ATP = L-isoleucyl-tRNA(Ile) + AMP + diphosphate. Functionally, catalyzes the attachment of isoleucine to tRNA(Ile). As IleRS can inadvertently accommodate and process structurally similar amino acids such as valine, to avoid such errors it has two additional distinct tRNA(Ile)-dependent editing activities. One activity is designated as 'pretransfer' editing and involves the hydrolysis of activated Val-AMP. The other activity is designated 'posttransfer' editing and involves deacylation of mischarged Val-tRNA(Ile). This is Isoleucine--tRNA ligase from Ruthia magnifica subsp. Calyptogena magnifica.